Reading from the N-terminus, the 189-residue chain is Putative manganese efflux pump MntP (189 aa).

6 consecutive transmembrane segments (helical) span residues 3-23, 41-61, 65-85, 106-128, 141-161, and 168-188; these read PVSL…AAIG, IIFG…GQAA, VADW…LHMI, WILA…GLAF, GLAT…LGAV, and MVGG…HLSA.

The protein belongs to the MntP (TC 9.B.29) family.

Its subcellular location is the cell inner membrane. Probably functions as a manganese efflux pump. The protein is Putative manganese efflux pump MntP of Pseudomonas aeruginosa (strain LESB58).